Reading from the N-terminus, the 637-residue chain is Biosynthetic arginine decarboxylase (637 aa).

Lys101 carries the N6-(pyridoxal phosphate)lysine modification. Residue 286–296 participates in substrate binding; the sequence is FDVGGGLAVDY.

It belongs to the Orn/Lys/Arg decarboxylase class-II family. SpeA subfamily. The cofactor is Mg(2+). It depends on pyridoxal 5'-phosphate as a cofactor.

The enzyme catalyses L-arginine + H(+) = agmatine + CO2. It functions in the pathway amine and polyamine biosynthesis; agmatine biosynthesis; agmatine from L-arginine: step 1/1. In terms of biological role, catalyzes the biosynthesis of agmatine from arginine. The sequence is that of Biosynthetic arginine decarboxylase from Shewanella woodyi (strain ATCC 51908 / MS32).